Reading from the N-terminus, the 103-residue chain is Large ribosomal subunit protein uL24 (103 aa).

Belongs to the universal ribosomal protein uL24 family. Part of the 50S ribosomal subunit.

Functionally, one of two assembly initiator proteins, it binds directly to the 5'-end of the 23S rRNA, where it nucleates assembly of the 50S subunit. In terms of biological role, one of the proteins that surrounds the polypeptide exit tunnel on the outside of the subunit. This is Large ribosomal subunit protein uL24 from Actinobacillus pleuropneumoniae serotype 5b (strain L20).